The following is an 81-amino-acid chain: Exodeoxyribonuclease 7 small subunit (81 aa).

The protein belongs to the XseB family. As to quaternary structure, heterooligomer composed of large and small subunits.

The protein resides in the cytoplasm. The catalysed reaction is Exonucleolytic cleavage in either 5'- to 3'- or 3'- to 5'-direction to yield nucleoside 5'-phosphates.. Its function is as follows. Bidirectionally degrades single-stranded DNA into large acid-insoluble oligonucleotides, which are then degraded further into small acid-soluble oligonucleotides. The chain is Exodeoxyribonuclease 7 small subunit from Ruegeria sp. (strain TM1040) (Silicibacter sp.).